The primary structure comprises 283 residues: Glutamate racemase (283 aa).

Substrate contacts are provided by residues D28 to S29 and Y60 to G61. Residue C92 is the Proton donor/acceptor of the active site. Position 93-94 (N93–T94) interacts with substrate. C204 functions as the Proton donor/acceptor in the catalytic mechanism. T205–H206 contributes to the substrate binding site.

The protein belongs to the aspartate/glutamate racemases family.

The enzyme catalyses L-glutamate = D-glutamate. It functions in the pathway cell wall biogenesis; peptidoglycan biosynthesis. Its function is as follows. Provides the (R)-glutamate required for cell wall biosynthesis. The chain is Glutamate racemase from Salmonella gallinarum (strain 287/91 / NCTC 13346).